Reading from the N-terminus, the 208-residue chain is Cytochrome c biogenesis ATP-binding export protein CcmA (208 aa).

One can recognise an ABC transporter domain in the interval leucine 3–lysine 206. An ATP-binding site is contributed by glycine 35–serine 42.

This sequence belongs to the ABC transporter superfamily. CcmA exporter (TC 3.A.1.107) family. As to quaternary structure, the complex is composed of two ATP-binding proteins (CcmA) and two transmembrane proteins (CcmB).

The protein resides in the cell inner membrane. The catalysed reaction is heme b(in) + ATP + H2O = heme b(out) + ADP + phosphate + H(+). Functionally, part of the ABC transporter complex CcmAB involved in the biogenesis of c-type cytochromes; once thought to export heme, this seems not to be the case, but its exact role is uncertain. Responsible for energy coupling to the transport system. The sequence is that of Cytochrome c biogenesis ATP-binding export protein CcmA from Bartonella henselae (strain ATCC 49882 / DSM 28221 / CCUG 30454 / Houston 1) (Rochalimaea henselae).